The primary structure comprises 287 residues: Diphthine methyl ester synthase (287 aa).

S-adenosyl-L-methionine contacts are provided by residues leucine 9, aspartate 84, glycine 87, 112–113 (SI), valine 163, valine 221, and histidine 248.

This sequence belongs to the diphthine synthase family.

The protein localises to the cytoplasm. It carries out the reaction 2-[(3S)-amino-3-carboxypropyl]-L-histidyl-[translation elongation factor 2] + 4 S-adenosyl-L-methionine = diphthine methyl ester-[translation elongation factor 2] + 4 S-adenosyl-L-homocysteine + 3 H(+). The protein operates within protein modification; peptidyl-diphthamide biosynthesis. In terms of biological role, S-adenosyl-L-methionine-dependent methyltransferase that catalyzes four methylations of the modified target histidine residue in translation elongation factor 2 (EF-2), to form an intermediate called diphthine methyl ester. The four successive methylation reactions represent the second step of diphthamide biosynthesis. The polypeptide is Diphthine methyl ester synthase (DPH5) (Gibberella zeae (strain ATCC MYA-4620 / CBS 123657 / FGSC 9075 / NRRL 31084 / PH-1) (Wheat head blight fungus)).